The chain runs to 246 residues: Uroporphyrinogen-III synthase (246 aa).

It belongs to the uroporphyrinogen-III synthase family. In terms of assembly, monomer.

It carries out the reaction hydroxymethylbilane = uroporphyrinogen III + H2O. The protein operates within porphyrin-containing compound metabolism; protoporphyrin-IX biosynthesis; coproporphyrinogen-III from 5-aminolevulinate: step 3/4. Catalyzes cyclization of the linear tetrapyrrole, hydroxymethylbilane, to the macrocyclic uroporphyrinogen III. The sequence is that of Uroporphyrinogen-III synthase (hemD) from Escherichia coli (strain K12).